We begin with the raw amino-acid sequence, 119 residues long: MPRVKGGTVTRARRKKVLKLAKGYRGSKHRLFKVAKDQVMKGRQYAFRDRKATKRNFRKLWIARINAAARMNGLSYSKLMHGLKLANIDVNRKMLADLAVNDAAAFAALAEQAKTALAA.

The protein belongs to the bacterial ribosomal protein bL20 family.

Binds directly to 23S ribosomal RNA and is necessary for the in vitro assembly process of the 50S ribosomal subunit. It is not involved in the protein synthesizing functions of that subunit. This Levilactobacillus brevis (strain ATCC 367 / BCRC 12310 / CIP 105137 / JCM 1170 / LMG 11437 / NCIMB 947 / NCTC 947) (Lactobacillus brevis) protein is Large ribosomal subunit protein bL20.